Here is a 701-residue protein sequence, read N- to C-terminus: Pentatricopeptide repeat-containing protein At5g50390, chloroplastic (701 aa).

Residues Met-1–Ser-47 constitute a chloroplast transit peptide. PPR repeat units lie at residues Ser-86–Arg-116, Gly-122–Pro-156, Glu-157–Arg-187, Asn-188–Glu-218, Glu-223–Asp-257, Asn-258–Lys-288, Thr-289–Ile-323, Asp-324–Ser-358, Glu-359–Lys-389, Asn-390–Pro-424, Asn-425–Pro-460, and Arg-461–Lys-491. A type E motif region spans residues Met-496–Gly-571. Residues Asp-572–Ser-606 form a type E(+) motif; degenerate region. The type DYW motif stretch occupies residues Glu-607–Trp-701.

This sequence belongs to the PPR family. PCMP-H subfamily.

The protein localises to the plastid. It localises to the chloroplast. This is Pentatricopeptide repeat-containing protein At5g50390, chloroplastic (PCMP-H58) from Arabidopsis thaliana (Mouse-ear cress).